The chain runs to 196 residues: Small ribosomal subunit protein uS4c (196 aa).

Positions 17 to 36 (ALPGLTRKTPKSGSNLKKKF) are disordered. The S4 RNA-binding domain occupies 89–169 (MRLDNILFRL…LPKHLTIDTL (81 aa)).

The protein belongs to the universal ribosomal protein uS4 family. As to quaternary structure, part of the 30S ribosomal subunit. Contacts protein S5. The interaction surface between S4 and S5 is involved in control of translational fidelity.

Its subcellular location is the plastid. The protein localises to the chloroplast. Its function is as follows. One of the primary rRNA binding proteins, it binds directly to 16S rRNA where it nucleates assembly of the body of the 30S subunit. With S5 and S12 plays an important role in translational accuracy. In Festuca gigantea (Giant fescue), this protein is Small ribosomal subunit protein uS4c (rps4).